A 393-amino-acid chain; its full sequence is Autophagy-related protein 18c (393 aa).

WD repeat units lie at residues 27–65, 70–114, 199–239, and 244–283; these read KEEA…ETFR, DGGF…CISE, AHDS…RLQE, and VDRA…VGED.

Belongs to the WD repeat PROPPIN family. In terms of assembly, component of the PI(3,5)P2 regulatory complex at least composed of ATG18, SAC/FIG4, FAB1 and VAC14. In terms of tissue distribution, expressed in roots, stems, flowers and leaves.

Its subcellular location is the preautophagosomal structure membrane. It is found in the vacuole membrane. In terms of biological role, the PI(3,5)P2 regulatory complex regulates both the synthesis and turnover of phosphatidylinositol 3,5-bisphosphate (PtdIns(3,5)P2). Required for autophagy. This Arabidopsis thaliana (Mouse-ear cress) protein is Autophagy-related protein 18c (ATG18C).